The primary structure comprises 986 residues: Translation initiation factor IF-2 (986 aa).

The disordered stretch occupies residues 47–388; sequence SAPAQTPHKE…RSKGRKGKYE (342 aa). The segment covering 53–64 has biased composition (basic and acidic residues); the sequence is PHKEVSQEEVRV. Positions 78–94 are enriched in low complexity; it reads PEAASAEAASAPAAQEE. Residues 95-113 are compositionally biased toward basic and acidic residues; that stretch reads APQKAEPEKVEAEKAEAPK. 2 stretches are compositionally biased toward low complexity: residues 127-141 and 153-214; these read EAAP…PAEA and APVA…QAPA. Composition is skewed to basic and acidic residues over residues 215–225 and 268–278; these read KAEEQEPEKAT and GVERPGTERPA. Residues 286 to 300 show a composition bias toward low complexity; that stretch reads PAGAPGRPGERPTTG. Residues 358-374 are compositionally biased toward basic and acidic residues; sequence GKKDSFKDILDKRERVF. In terms of domain architecture, tr-type G spans 486-653; sequence KRPPVVTIMG…MVLLQADVLE (168 aa). Residues 495–502 form a G1 region; it reads GHVDHGKT. 495 to 502 contacts GTP; it reads GHVDHGKT. The interval 520–524 is G2; the sequence is GITQH. A G3 region spans residues 541 to 544; it reads DTPG. Residues 541–545 and 595–598 contribute to the GTP site; these read DTPGH and NKID. The tract at residues 595–598 is G4; it reads NKID. Residues 631–633 form a G5 region; that stretch reads SAK.

Belongs to the TRAFAC class translation factor GTPase superfamily. Classic translation factor GTPase family. IF-2 subfamily.

The protein localises to the cytoplasm. One of the essential components for the initiation of protein synthesis. Protects formylmethionyl-tRNA from spontaneous hydrolysis and promotes its binding to the 30S ribosomal subunits. Also involved in the hydrolysis of GTP during the formation of the 70S ribosomal complex. This chain is Translation initiation factor IF-2, found in Citrifermentans bemidjiense (strain ATCC BAA-1014 / DSM 16622 / JCM 12645 / Bem) (Geobacter bemidjiensis).